We begin with the raw amino-acid sequence, 222 residues long: Germin-like protein subfamily 1 member 16 (222 aa).

Residues 1–22 (MRVSQSLIPFAIIALVLSFVNA) form the signal peptide. Cys-32 and Cys-48 are oxidised to a cystine. A Cupin type-1 domain is found at 62–213 (SGLNVPGNTN…AFQLDANVVK (152 aa)). The N-linked (GlcNAc...) asparagine glycan is linked to Asn-77. Residues His-110, His-112, Glu-117, and His-159 each coordinate Mn(2+).

This sequence belongs to the germin family. In terms of assembly, oligomer (believed to be a pentamer but probably hexamer).

It is found in the secreted. It localises to the extracellular space. The protein resides in the apoplast. Functionally, may play a role in plant defense. Probably has no oxalate oxidase activity even if the active site is conserved. This chain is Germin-like protein subfamily 1 member 16, found in Arabidopsis thaliana (Mouse-ear cress).